Consider the following 497-residue polypeptide: MADRPIRVRYAPSPTGHLHIGNARTALFNYLFARHNNGTLVLRIEDTDTKRNVADGEKSQMENLHWLGIDWDEGPDKGGDFGPYRQSERKDIYDKLIKQLVDKGFAYESYRTEEELKADREAQKARHEMPHYEYEYEGMTDAEKADAIAAAKAKGLEPVIRFHIPMDKTYEWDDIVKGKISIDANTLGGDFVIQKRDGMPTYNFAVVVDDHMMQISHVLRGDDHIANTPKQLAIYDAFGWEPPIFGHMTLIINGATGKKLSKRDETVLQFIEQYRELGYLPDAMFNFITLLGWSPVGEDEIFTKKEFIKQFDPKRLSKSPARFDQKKLEWVNNQYIKAKQKTNPNELMSLSLANLIEDGKIHSDPDPKTIEWARQLISLYTDQMSYTAQISKLADIFFDKATDLTDDERKELADDNAKPVIEAFAKKIRALDTFDAYSIGGIVNEVKQETKVKGRKLYMPIRIAATLRMHGPQLAETIELMGRDQVLKNVDLVTGQL.

Positions 12 to 22 (PSPTGHLHIGN) match the 'HIGH' region motif. A 'KMSKS' region motif is present at residues 259–263 (KLSKR). Lys262 contacts ATP.

It belongs to the class-I aminoacyl-tRNA synthetase family. Glutamate--tRNA ligase type 1 subfamily. Monomer.

Its subcellular location is the cytoplasm. It carries out the reaction tRNA(Glu) + L-glutamate + ATP = L-glutamyl-tRNA(Glu) + AMP + diphosphate. In terms of biological role, catalyzes the attachment of glutamate to tRNA(Glu) in a two-step reaction: glutamate is first activated by ATP to form Glu-AMP and then transferred to the acceptor end of tRNA(Glu). This chain is Glutamate--tRNA ligase, found in Lacticaseibacillus casei (strain BL23) (Lactobacillus casei).